A 498-amino-acid chain; its full sequence is Ribose import ATP-binding protein RbsA 1 (498 aa).

ABC transporter domains are found at residues 7 to 243 (LHIQ…VGRR) and 254 to 496 (PRGE…IGKS). Residue 39–46 (GENGAGKS) participates in ATP binding.

The protein belongs to the ABC transporter superfamily. Ribose importer (TC 3.A.1.2.1) family. In terms of assembly, the complex is composed of an ATP-binding protein (RbsA), two transmembrane proteins (RbsC) and a solute-binding protein (RbsB).

Its subcellular location is the cell inner membrane. It carries out the reaction D-ribose(out) + ATP + H2O = D-ribose(in) + ADP + phosphate + H(+). Its function is as follows. Part of the ABC transporter complex RbsABC involved in ribose import. Responsible for energy coupling to the transport system. This is Ribose import ATP-binding protein RbsA 1 from Pasteurella multocida (strain Pm70).